Here is a 186-residue protein sequence, read N- to C-terminus: Protein GrpE (186 aa).

Residues 1–22 (MSDSNKEKKKKFADMVSKRKGD) are compositionally biased toward basic and acidic residues. The disordered stretch occupies residues 1–35 (MSDSNKEKKKKFADMVSKRKGDDQEDQQTGDLSEE). Over residues 23 to 34 (DQEDQQTGDLSE) the composition is skewed to acidic residues.

It belongs to the GrpE family. Homodimer.

It is found in the cytoplasm. In terms of biological role, participates actively in the response to hyperosmotic and heat shock by preventing the aggregation of stress-denatured proteins, in association with DnaK and GrpE. It is the nucleotide exchange factor for DnaK and may function as a thermosensor. Unfolded proteins bind initially to DnaJ; upon interaction with the DnaJ-bound protein, DnaK hydrolyzes its bound ATP, resulting in the formation of a stable complex. GrpE releases ADP from DnaK; ATP binding to DnaK triggers the release of the substrate protein, thus completing the reaction cycle. Several rounds of ATP-dependent interactions between DnaJ, DnaK and GrpE are required for fully efficient folding. This Wolbachia pipientis subsp. Culex pipiens (strain wPip) protein is Protein GrpE.